Consider the following 227-residue polypeptide: ATP synthase F(0) complex subunit a (227 aa).

6 consecutive transmembrane segments (helical) span residues 14–34 (YLGI…FPLP), 69–89 (WALL…LGLL), 98–118 (QLSL…IIGL), 132–152 (EGTP…SLFI), 179–199 (VFVL…VLFL), and 202–222 (LLEV…LSLY).

Belongs to the ATPase A chain family. Component of the ATP synthase complex composed at least of ATP5F1A/subunit alpha, ATP5F1B/subunit beta, ATP5MC1/subunit c (homooctomer), MT-ATP6/subunit a, MT-ATP8/subunit 8, ATP5ME/subunit e, ATP5MF/subunit f, ATP5MG/subunit g, ATP5MK/subunit k, ATP5MJ/subunit j, ATP5F1C/subunit gamma, ATP5F1D/subunit delta, ATP5F1E/subunit epsilon, ATP5PF/subunit F6, ATP5PB/subunit b, ATP5PD/subunit d, ATP5PO/subunit OSCP. ATP synthase complex consists of a soluble F(1) head domain (subunits alpha(3) and beta(3)) - the catalytic core - and a membrane F(0) domain - the membrane proton channel (subunits c, a, 8, e, f, g, k and j). These two domains are linked by a central stalk (subunits gamma, delta, and epsilon) rotating inside the F1 region and a stationary peripheral stalk (subunits F6, b, d, and OSCP). Interacts with DNAJC30; interaction is direct.

It localises to the mitochondrion inner membrane. It carries out the reaction H(+)(in) = H(+)(out). In terms of biological role, subunit a, of the mitochondrial membrane ATP synthase complex (F(1)F(0) ATP synthase or Complex V) that produces ATP from ADP in the presence of a proton gradient across the membrane which is generated by electron transport complexes of the respiratory chain. ATP synthase complex consist of a soluble F(1) head domain - the catalytic core - and a membrane F(1) domain - the membrane proton channel. These two domains are linked by a central stalk rotating inside the F(1) region and a stationary peripheral stalk. During catalysis, ATP synthesis in the catalytic domain of F(1) is coupled via a rotary mechanism of the central stalk subunits to proton translocation. With the subunit c (ATP5MC1), forms the proton-conducting channel in the F(0) domain, that contains two crucial half-channels (inlet and outlet) that facilitate proton movement from the mitochondrial intermembrane space (IMS) into the matrix. Protons are taken up via the inlet half-channel and released through the outlet half-channel, following a Grotthuss mechanism. The polypeptide is ATP synthase F(0) complex subunit a (Formosania lacustris (Oriental stream loach)).